The sequence spans 191 residues: uncharacterized protein (191 aa).

This is an uncharacterized protein from Methanocaldococcus jannaschii (strain ATCC 43067 / DSM 2661 / JAL-1 / JCM 10045 / NBRC 100440) (Methanococcus jannaschii).